The primary structure comprises 306 residues: GTP-binding protein RAD (306 aa).

Residues 1 to 13 show a composition bias toward gly residues; that stretch reads MTLNGGSGAGGSR. Positions 1–91 are disordered; the sequence is MTLNGGSGAG…GDSGSEDGVY (91 aa). Arginine 23 is subject to Omega-N-methylarginine. A Phosphoserine modification is found at serine 25. The segment covering 56–88 has biased composition (low complexity); that stretch reads AATAAGTRTQGQRLDWPEGSSDSLSSGDSGSED. GTP-binding positions include 97 to 104 and 201 to 204; these read GAPGVGKS and NKSD. Residues 276–295 form a calmodulin-binding region; the sequence is AKLFLGRIVARNSRKMAFLA.

This sequence belongs to the small GTPase superfamily. RGK family. In terms of assembly, interacts with Calmodulin preferentially in the inactive, GDP-bound form. Interacts with CAMK2D. Interacts with CACNB2; interaction may be involved in beta-adrenergic regulation of heart rate and contractile force. Interaction with CACNB2 regulates the trafficking of CACNA1C to the cell membrane.

It localises to the cell membrane. May regulate basal voltage-dependent L-type Ca(2+) currents and be required for beta-adrenergic augmentation of Ca(2+) influx in cardiomyocytes, thereby regulating increases in heart rate and contractile force. May play an important role in cardiac antiarrhythmia via the strong suppression of voltage-dependent L-type Ca(2+) currents. Regulates voltage-gated L-type calcium channel subunit alpha-1C trafficking to the cell membrane. Inhibits cardiac hypertrophy through the calmodulin-dependent kinase II (CaMKII) pathway. Inhibits phosphorylation and activation of CAMK2D. This chain is GTP-binding protein RAD (Rrad), found in Rattus norvegicus (Rat).